The chain runs to 150 residues: Truncated transcription factor CAULIFLOWER A (150 aa).

The MADS-box domain occupies 1 to 61; it reads MGRGRVEMKR…GKLFEYSSES (61 aa). The K-box; partial domain maps to 90–150; it reads QTNWSMEYSR…IRSRKNQLMH (61 aa).

In terms of assembly, homodimer capable of binding to CArG-box sequences. In terms of tissue distribution, expressed in some of the meristems of arrest-stage cauliflower heads.

The protein localises to the nucleus. Probable transcription factor that promotes early floral meristem identity in synergy with APETALA1, FRUITFULL and LEAFY. Is required subsequently for the transition of an inflorescence meristem into a floral meristem. Seems to be partially redundant to the function of APETALA1. The polypeptide is Truncated transcription factor CAULIFLOWER A (CAL-A) (Brassica oleracea var. botrytis (Cauliflower)).